We begin with the raw amino-acid sequence, 850 residues long: Protein STB2 (850 aa).

Phosphoserine occurs at positions 594 and 625.

To yeast STB6. Interacts with SIN3.

The polypeptide is Protein STB2 (STB2) (Saccharomyces cerevisiae (strain ATCC 204508 / S288c) (Baker's yeast)).